Consider the following 468-residue polypeptide: Bifunctional protein HldE (468 aa).

Residues methionine 1–glutamate 315 are ribokinase. Asparagine 192–glutamate 195 contacts ATP. The active site involves aspartate 260. The cytidylyltransferase stretch occupies residues phenylalanine 340–lysine 468.

In the N-terminal section; belongs to the carbohydrate kinase PfkB family. The protein in the C-terminal section; belongs to the cytidylyltransferase family. In terms of assembly, homodimer.

The catalysed reaction is D-glycero-beta-D-manno-heptose 7-phosphate + ATP = D-glycero-beta-D-manno-heptose 1,7-bisphosphate + ADP + H(+). The enzyme catalyses D-glycero-beta-D-manno-heptose 1-phosphate + ATP + H(+) = ADP-D-glycero-beta-D-manno-heptose + diphosphate. It participates in nucleotide-sugar biosynthesis; ADP-L-glycero-beta-D-manno-heptose biosynthesis; ADP-L-glycero-beta-D-manno-heptose from D-glycero-beta-D-manno-heptose 7-phosphate: step 1/4. The protein operates within nucleotide-sugar biosynthesis; ADP-L-glycero-beta-D-manno-heptose biosynthesis; ADP-L-glycero-beta-D-manno-heptose from D-glycero-beta-D-manno-heptose 7-phosphate: step 3/4. Its function is as follows. Catalyzes the phosphorylation of D-glycero-D-manno-heptose 7-phosphate at the C-1 position to selectively form D-glycero-beta-D-manno-heptose-1,7-bisphosphate. In terms of biological role, catalyzes the ADP transfer from ATP to D-glycero-beta-D-manno-heptose 1-phosphate, yielding ADP-D-glycero-beta-D-manno-heptose. The chain is Bifunctional protein HldE from Campylobacter curvus (strain 525.92).